A 41-amino-acid polypeptide reads, in one-letter code: Photosystem I reaction center subunit IX (41 aa).

A helical membrane pass occupies residues 7 to 27 (YLSTVPVVFAIWLTFTAGLII).

This sequence belongs to the PsaJ family.

It is found in the plastid. Its subcellular location is the chloroplast thylakoid membrane. Its function is as follows. May help in the organization of the PsaE and PsaF subunits. This Bigelowiella natans (Pedinomonas minutissima) protein is Photosystem I reaction center subunit IX.